The chain runs to 271 residues: Phosphoglycerate mutase-like protein (271 aa).

His-22 (tele-phosphohistidine intermediate) is an active-site residue. Catalysis depends on Glu-134, which acts as the Proton donor/acceptor. Residues 252 to 271 are disordered; sequence SAETTNYPGKVPEGLDNPSG.

The protein belongs to the phosphoglycerate mutase family. In terms of tissue distribution, expressed in the shoot apical meristem and meristematic zone of the root tips.

Functionally, may play a role in carbohydrates metabolism. The chain is Phosphoglycerate mutase-like protein from Arabidopsis thaliana (Mouse-ear cress).